The following is a 530-amino-acid chain: Pancreatic secretory granule membrane major glycoprotein GP2 (530 aa).

A signal peptide spans 1–21; that stretch reads MVACDLLWLAAASCLLTLVFP. A glycan (N-linked (GlcNAc...) asparagine) is linked at Asn-33. Intrachain disulfides connect Cys-41–Cys-52, Cys-56–Cys-150, Cys-78–Cys-168, Cys-100–Cys-138, Cys-106–Cys-173, Cys-131–Cys-139, Cys-183–Cys-193, Cys-187–Cys-202, Cys-204–Cys-234, Cys-222–Cys-313, and Cys-254–Cys-277. Residues 54–74 are D10C; sequence DPCQNHTVLNDPSRSTENTVS. Asn-58 and Asn-127 each carry an N-linked (GlcNAc...) asparagine glycan. The EGF-like domain maps to 179–223; the sequence is APKKCEIACRPEEECVFQNNSWTCVCRQDLNVSDTLSLQPLLDCG. N-linked (GlcNAc...) asparagine glycosylation is found at Asn-197 and Asn-209. The tract at residues 221–314 is ZP-N; the sequence is DCGANEIKVK…FLVNVNFQCA (94 aa). The ZP domain occupies 221–477; that stretch reads DCGANEIKVK…PSCSTSRLRS (257 aa). Asn-284 and Asn-320 each carry an N-linked (GlcNAc...) asparagine glycan. The interval 315-338 is flexible ZP-N/ZP-C linker; that stretch reads YPLDMNVSLQTALQPIVSSLNVDV. Residues 339–350 form an internal hydrophobic patch (IHP) region; sequence GGAGEFTVTMAL. The interval 339 to 477 is ZP-C; the sequence is GGAGEFTVTM…PSCSTSRLRS (139 aa). Intrachain disulfides connect Cys-394–Cys-454, Cys-415–Cys-470, and Cys-459–Cys-466. An external hydrophobic patch (EHP) region spans residues 484-492; sequence LTRVLDIGP. The GPI-anchor amidated asparagine moiety is linked to residue Asn-505. Residues 506–530 constitute a propeptide, removed in mature form; sequence GTPRNTGFLLAWPTFFLPVFLAWLF.

As to quaternary structure, interacts with SYCN. Interacts with bacterial adhesin fimH. N-glycosylated. In terms of tissue distribution, expressed in pancreas.

It is found in the zymogen granule membrane. Its subcellular location is the secreted. It localises to the cell membrane. The protein localises to the apical cell membrane. The protein resides in the membrane raft. It is found in the endosome. In terms of biological role, functions as an intestinal M-cell transcytotic receptor specific of type-I-piliated bacteria that participates in the mucosal immune response toward these bacteria. At the apical membrane of M-cells it binds fimH, a protein of the bacteria type I pilus tip. Internalizes bound bacteria, like E.coli and S.typhimurium, from the lumen of the intestine and delivers them, through M-cells, to the underlying organized lymphoid follicles where they are captured by antigen-presenting dendritic cells to elicit a mucosal immune response. In Rattus norvegicus (Rat), this protein is Pancreatic secretory granule membrane major glycoprotein GP2.